The sequence spans 375 residues: 23S rRNA (uracil(747)-C(5))-methyltransferase RlmC (375 aa).

[4Fe-4S] cluster contacts are provided by cysteine 3, cysteine 11, cysteine 14, and cysteine 87. Positions 212, 241, 262, and 307 each coordinate S-adenosyl-L-methionine. Cysteine 334 serves as the catalytic Nucleophile.

The protein belongs to the class I-like SAM-binding methyltransferase superfamily. RNA M5U methyltransferase family. RlmC subfamily.

The catalysed reaction is uridine(747) in 23S rRNA + S-adenosyl-L-methionine = 5-methyluridine(747) in 23S rRNA + S-adenosyl-L-homocysteine + H(+). Its function is as follows. Catalyzes the formation of 5-methyl-uridine at position 747 (m5U747) in 23S rRNA. This Xenorhabdus nematophila (strain ATCC 19061 / DSM 3370 / CCUG 14189 / LMG 1036 / NCIMB 9965 / AN6) protein is 23S rRNA (uracil(747)-C(5))-methyltransferase RlmC.